Here is a 334-residue protein sequence, read N- to C-terminus: Aromatic O-demethylase, reductase subunit (334 aa).

The 91-residue stretch at 1–91 (MTFAVSVGGR…DTEVRSTADA (91 aa)) folds into the 2Fe-2S ferredoxin-type domain. [2Fe-2S] cluster-binding residues include Cys-35, Cys-40, Cys-43, and Cys-75. An FAD-binding FR-type domain is found at 98-198 (LRDLTATVLE…TGPLGDFHLP (101 aa)). FAD contacts are provided by residues 145–148 (RQYS), 162–164 (HVR), 170–172 (VAT), Thr-215, Phe-330, and Ser-334.

As to quaternary structure, monomer. Forms a heterodimer with GcoA. Requires FAD as cofactor. [2Fe-2S] cluster is required as a cofactor.

The catalysed reaction is 2 oxidized [cytochrome P450] + NADH = 2 reduced [cytochrome P450] + NAD(+) + H(+). It functions in the pathway aromatic compound metabolism. Functionally, part of a two-component P450 system that efficiently O-demethylates diverse aromatic substrates such as guaiacol and a wide variety of lignin-derived monomers. Is likely involved in lignin degradation, allowing Amycolatopsis sp. ATCC 39116 to catabolize plant biomass. GcoB transfers electrons from NADH to the cytochrome P450 subunit GcoA. Highly prefers NADH over NADPH as the electron donor. The protein is Aromatic O-demethylase, reductase subunit of Amycolatopsis sp. (strain ATCC 39116 / 75iv2).